A 39-amino-acid polypeptide reads, in one-letter code: Cytochrome b559 subunit beta (39 aa).

A helical membrane pass occupies residues Trp14–Ser30. A heme-binding site is contributed by His18.

It belongs to the PsbE/PsbF family. As to quaternary structure, heterodimer of an alpha subunit and a beta subunit. PSII is composed of 1 copy each of membrane proteins PsbA, PsbB, PsbC, PsbD, PsbE, PsbF, PsbH, PsbI, PsbJ, PsbK, PsbL, PsbM, PsbT, PsbX, PsbY, PsbZ, Psb30/Ycf12, at least 3 peripheral proteins of the oxygen-evolving complex and a large number of cofactors. It forms dimeric complexes. Requires heme b as cofactor.

The protein localises to the plastid. The protein resides in the chloroplast thylakoid membrane. Its function is as follows. This b-type cytochrome is tightly associated with the reaction center of photosystem II (PSII). PSII is a light-driven water:plastoquinone oxidoreductase that uses light energy to abstract electrons from H(2)O, generating O(2) and a proton gradient subsequently used for ATP formation. It consists of a core antenna complex that captures photons, and an electron transfer chain that converts photonic excitation into a charge separation. This chain is Cytochrome b559 subunit beta, found in Lactuca sativa (Garden lettuce).